Reading from the N-terminus, the 188-residue chain is Peptidyl-tRNA hydrolase (188 aa).

Tyr14 is a binding site for tRNA. The active-site Proton acceptor is the His19. Residues Tyr64, Asn66, and Asn112 each coordinate tRNA.

It belongs to the PTH family. In terms of assembly, monomer.

Its subcellular location is the cytoplasm. The catalysed reaction is an N-acyl-L-alpha-aminoacyl-tRNA + H2O = an N-acyl-L-amino acid + a tRNA + H(+). Hydrolyzes ribosome-free peptidyl-tRNAs (with 1 or more amino acids incorporated), which drop off the ribosome during protein synthesis, or as a result of ribosome stalling. Functionally, catalyzes the release of premature peptidyl moieties from peptidyl-tRNA molecules trapped in stalled 50S ribosomal subunits, and thus maintains levels of free tRNAs and 50S ribosomes. In Clostridium perfringens (strain ATCC 13124 / DSM 756 / JCM 1290 / NCIMB 6125 / NCTC 8237 / Type A), this protein is Peptidyl-tRNA hydrolase.